The primary structure comprises 266 residues: Protein PAE0875 (266 aa).

It belongs to the CinA family.

The polypeptide is Protein PAE0875 (Pyrobaculum aerophilum (strain ATCC 51768 / DSM 7523 / JCM 9630 / CIP 104966 / NBRC 100827 / IM2)).